The primary structure comprises 264 residues: MKQYLDLCQRILDEGVIKEDRTGTGTTSVFGHQMRFDLSEGFPMVTTKKLHMKSIIHELLWFLSGDTNVRYLQENGVRIWNEWADENGDLGPVYGSQWRSFTGRDGKTVDQIQWVIDEIKRNPDSRRLIVSAWNPAELDKMALPPCHLLFQFYVANGKLSCQLYQRSGDTFLGVPFNIASYALLTHMVAHVTGLEVGDFVHTIGDAHLYLNHIEQVKLQLTREPKPLPKLVLNPDVTSIFDFKYEDIEIVGYESHPHIKGEVAV.

R21 contacts dUMP. Residue H51 participates in (6R)-5,10-methylene-5,6,7,8-tetrahydrofolate binding. 126 to 127 (RR) is a dUMP binding site. The active-site Nucleophile is C146. Residues 166 to 169 (RSGD), N177, and 207 to 209 (HLY) each bind dUMP. D169 is a (6R)-5,10-methylene-5,6,7,8-tetrahydrofolate binding site. A (6R)-5,10-methylene-5,6,7,8-tetrahydrofolate-binding site is contributed by A263.

Belongs to the thymidylate synthase family. Bacterial-type ThyA subfamily. As to quaternary structure, homodimer.

The protein localises to the cytoplasm. The catalysed reaction is dUMP + (6R)-5,10-methylene-5,6,7,8-tetrahydrofolate = 7,8-dihydrofolate + dTMP. It functions in the pathway pyrimidine metabolism; dTTP biosynthesis. Functionally, catalyzes the reductive methylation of 2'-deoxyuridine-5'-monophosphate (dUMP) to 2'-deoxythymidine-5'-monophosphate (dTMP) while utilizing 5,10-methylenetetrahydrofolate (mTHF) as the methyl donor and reductant in the reaction, yielding dihydrofolate (DHF) as a by-product. This enzymatic reaction provides an intracellular de novo source of dTMP, an essential precursor for DNA biosynthesis. The polypeptide is Thymidylate synthase (Brevibacillus brevis (strain 47 / JCM 6285 / NBRC 100599)).